Reading from the N-terminus, the 210-residue chain is N-(5'-phosphoribosyl)anthranilate isomerase (210 aa).

This sequence belongs to the TrpF family.

It carries out the reaction N-(5-phospho-beta-D-ribosyl)anthranilate = 1-(2-carboxyphenylamino)-1-deoxy-D-ribulose 5-phosphate. It participates in amino-acid biosynthesis; L-tryptophan biosynthesis; L-tryptophan from chorismate: step 3/5. This is N-(5'-phosphoribosyl)anthranilate isomerase from Methanococcus aeolicus (strain ATCC BAA-1280 / DSM 17508 / OCM 812 / Nankai-3).